The chain runs to 429 residues: Histidine--tRNA ligase (429 aa).

The protein belongs to the class-II aminoacyl-tRNA synthetase family. As to quaternary structure, homodimer.

Its subcellular location is the cytoplasm. The enzyme catalyses tRNA(His) + L-histidine + ATP = L-histidyl-tRNA(His) + AMP + diphosphate + H(+). The polypeptide is Histidine--tRNA ligase (Streptococcus pneumoniae serotype 4 (strain ATCC BAA-334 / TIGR4)).